The chain runs to 394 residues: Protein TsgA homolog (394 aa).

The next 12 membrane-spanning stretches (helical) occupy residues 11-31 (WISY…GMVM), 51-71 (FLNA…EIIP), 76-96 (LVFG…GHNL), 101-121 (ISMF…TFLI), 134-154 (LLFT…AAAI), 162-182 (WYWV…LTLC), 206-226 (MGVL…LGFI), 246-266 (QLVS…SFIL), 274-294 (IVTV…STNN), 302-322 (ILAL…LGSL), 334-354 (FILT…GPIV), and 363-383 (LATA…LGFF).

Belongs to the major facilitator superfamily. TsgA family.

Its subcellular location is the cell inner membrane. The protein is Protein TsgA homolog of Yersinia enterocolitica serotype O:8 / biotype 1B (strain NCTC 13174 / 8081).